Reading from the N-terminus, the 126-residue chain is Large ribosomal subunit protein bL17 (126 aa).

The protein belongs to the bacterial ribosomal protein bL17 family. Part of the 50S ribosomal subunit. Contacts protein L32.

The protein is Large ribosomal subunit protein bL17 of Magnetococcus marinus (strain ATCC BAA-1437 / JCM 17883 / MC-1).